The sequence spans 444 residues: tRNA-2-methylthio-N(6)-dimethylallyladenosine synthase (444 aa).

The 117-residue stretch at 4–120 (PTYYTITFGC…LGDLLAQVEA (117 aa)) folds into the MTTase N-terminal domain. Cys13, Cys49, Cys83, Cys155, Cys159, and Cys162 together coordinate [4Fe-4S] cluster. Residues 141–372 (RDSQVTAWIN…RLVAEVAAAR (232 aa)) form the Radical SAM core domain. The 65-residue stretch at 374–438 (ARLLGQVQEV…AFSLTGEAVT (65 aa)) folds into the TRAM domain.

It belongs to the methylthiotransferase family. MiaB subfamily. Monomer. [4Fe-4S] cluster serves as cofactor.

The protein resides in the cytoplasm. The catalysed reaction is N(6)-dimethylallyladenosine(37) in tRNA + (sulfur carrier)-SH + AH2 + 2 S-adenosyl-L-methionine = 2-methylsulfanyl-N(6)-dimethylallyladenosine(37) in tRNA + (sulfur carrier)-H + 5'-deoxyadenosine + L-methionine + A + S-adenosyl-L-homocysteine + 2 H(+). Functionally, catalyzes the methylthiolation of N6-(dimethylallyl)adenosine (i(6)A), leading to the formation of 2-methylthio-N6-(dimethylallyl)adenosine (ms(2)i(6)A) at position 37 in tRNAs that read codons beginning with uridine. This chain is tRNA-2-methylthio-N(6)-dimethylallyladenosine synthase, found in Synechococcus sp. (strain JA-2-3B'a(2-13)) (Cyanobacteria bacterium Yellowstone B-Prime).